The following is a 128-amino-acid chain: MEQTFVAIKPDGVQRGLCGEVMKFIQPMKHYLDLKDMPFYAGLCKYMSSGPVFAMVWEGEGIVKMMLGETNPADSKPGSIRGDFCINIGRNIIHGSDTVENAKMEVGLWFKPEEFVAYAEKAKAWVYE.

Met1 bears the N-acetylmethionine mark. ATP-binding residues include Lys9, Phe39, Thr70, Arg81, and Asn91. His94 (pros-phosphohistidine intermediate) is an active-site residue.

It belongs to the NDK family. It depends on Mg(2+) as a cofactor.

The protein localises to the cytoplasm. It is found in the nucleus. It localises to the cell projection. Its subcellular location is the lamellipodium. The protein resides in the ruffle. The catalysed reaction is a 2'-deoxyribonucleoside 5'-diphosphate + ATP = a 2'-deoxyribonucleoside 5'-triphosphate + ADP. It carries out the reaction a ribonucleoside 5'-diphosphate + ATP = a ribonucleoside 5'-triphosphate + ADP. In terms of biological role, major role in the synthesis of nucleoside triphosphates other than ATP. The polypeptide is Nucleoside diphosphate kinase B (nme2) (Merluccius australis australis (Austral hake)).